Here is a 31-residue protein sequence, read N- to C-terminus: Cytochrome b6-f complex subunit 6 (31 aa).

Residues 4-26 (ITSYFGFLLAASTITPALLIGLS) traverse the membrane as a helical segment.

It belongs to the PetL family. In terms of assembly, the 4 large subunits of the cytochrome b6-f complex are cytochrome b6, subunit IV (17 kDa polypeptide, PetD), cytochrome f and the Rieske protein, while the 4 small subunits are PetG, PetL, PetM and PetN. The complex functions as a dimer.

The protein localises to the plastid. It localises to the chloroplast thylakoid membrane. In terms of biological role, component of the cytochrome b6-f complex, which mediates electron transfer between photosystem II (PSII) and photosystem I (PSI), cyclic electron flow around PSI, and state transitions. PetL is important for photoautotrophic growth as well as for electron transfer efficiency and stability of the cytochrome b6-f complex. The protein is Cytochrome b6-f complex subunit 6 of Liriodendron tulipifera (Tuliptree).